A 259-amino-acid polypeptide reads, in one-letter code: UPF0246 protein PSPA7_1607 (259 aa).

It belongs to the UPF0246 family.

This is UPF0246 protein PSPA7_1607 from Pseudomonas paraeruginosa (strain DSM 24068 / PA7) (Pseudomonas aeruginosa (strain PA7)).